Reading from the N-terminus, the 624-residue chain is ATP-dependent zinc metalloprotease FtsH (624 aa).

The Cytoplasmic portion of the chain corresponds to 1–7 (MPRAPFS). Residues 8-28 (LLALVLGLAFLAWAFSLAGTV) traverse the membrane as a helical segment. At 29–103 (GAPSGTVNYT…VRVEPPQGQN (75 aa)) the chain is on the periplasmic side. The chain crosses the membrane as a helical span at residues 104-124 (ALGFLWPLLLVGLLIGALYYF). At 125-624 (SRNGRAGPSD…VKPGGALGGA (500 aa)) the chain is on the cytoplasmic side. ATP-binding positions include alanine 159, 199–203 (GVGKT), and histidine 204. Histidine 418 contacts Zn(2+). Glutamate 419 is an active-site residue. Zn(2+) contacts are provided by histidine 422 and aspartate 493. The disordered stretch occupies residues 595–624 (PLEAPEEAREEREPPRVVPKVKPGGALGGA). Residues 600–609 (EEAREEREPP) are compositionally biased toward basic and acidic residues.

This sequence in the central section; belongs to the AAA ATPase family. It in the C-terminal section; belongs to the peptidase M41 family. In terms of assembly, the isolated soluble domain (residues 126-624) forms a stable hexamer in which the AAA+ domains (residues 126-400) are alternatively open or closed. It depends on Zn(2+) as a cofactor.

The protein localises to the cell inner membrane. The proteolytic activity is dependent on ATP, both the ATPase and protease activities are inhibited by ADP. Acts as a processive, ATP-dependent zinc metallopeptidase for both cytoplasmic and membrane proteins. Plays a role in the quality control of integral membrane proteins. Its function is as follows. Degrades preferentially unfolded substrates in a processive, ATP-dependent manner, usually after hydrophobic residues. The chain is ATP-dependent zinc metalloprotease FtsH from Thermus thermophilus (strain ATCC 27634 / DSM 579 / HB8).